The sequence spans 486 residues: Deleted in azoospermia protein 3 (486 aa).

Positions 1-10 (MSAANPETPN) are enriched in polar residues. Residues 1–27 (MSAANPETPNSTISREASTQSSSAAAS) are disordered. A compositionally biased stretch (low complexity) spans 11–27 (STISREASTQSSSAAAS). One can recognise an RRM domain in the interval 40 to 115 (NTVFVGGIDA…KKLKLGPAIR (76 aa)). 12 DAZ domains span residues 167–190 (AYSA…YNYQ), 191–214 (EYPT…YNYQ), 215–238 (PFPA…YNYQ), 239–262 (AFPA…YNYQ), 263–286 (PFPA…YNYQ), 287–310 (AFPA…YNYQ), 311–334 (AFPA…YNYQ), 335–358 (AFPA…YNYQ), 359–382 (AFPA…YNYQ), 383–406 (AFPA…YNYQ), 407–430 (AFPA…YNYQ), and 431–454 (AFPA…YNYQ).

This sequence belongs to the RRM DAZ family. As to quaternary structure, forms a heterodimer with BOLL and DAZL. Interacts with PUM2, DAZAP1, DAZAP2, DZIP1 and DZIP3. In terms of tissue distribution, testis specific.

It is found in the cytoplasm. The protein localises to the nucleus. RNA-binding protein that plays an essential role in spermatogenesis. May act by binding to the 3'-UTR of mRNAs and regulating their translation. The polypeptide is Deleted in azoospermia protein 3 (DAZ3) (Homo sapiens (Human)).